Reading from the N-terminus, the 238-residue chain is Major prion protein (238 aa).

The first 15 residues, 1–15 (MLVLFVATWSDLGLC), serve as a signal peptide directing secretion. The segment at 16-215 (KKRPKPGGWN…ESQAYYQRGS (200 aa)) is interaction with GRB2, ERI3 and SYN1. Residues 18 to 93 (RPKPGGWNTG…WHKPSKPKTS (76 aa)) form a disordered region. 4 tandem repeats follow at residues 44–52 (PQGGGGWGQ), 53–60 (PHGGGWGQ), 61–68 (PHGGGWGQ), and 69–76 (PHGGGWGQ). The 4 X 8 AA tandem repeats of P-H-G-G-G-W-G-Q stretch occupies residues 44-83 (PQGGGGWGQPHGGGWGQPHGGGWGQPHGGGWGQGGGTHNQ). The segment covering 45–80 (QGGGGWGQPHGGGWGQPHGGGWGQPHGGGWGQGGGT) has biased composition (gly residues). Positions 47, 48, 54, 55, 56, 62, 63, 64, 70, 71, and 72 each coordinate Cu(2+). Residues 83-93 (QWHKPSKPKTS) are compositionally biased toward basic residues. Cys-164 and Cys-199 are joined by a disulfide. N-linked (GlcNAc...) asparagine glycosylation is found at Asn-166 and Asn-182. The GPI-anchor amidated serine moiety is linked to residue Ser-215. Residues 216-238 (SIVLFSSPPVILLISFLIFLIVG) constitute a propeptide, removed in mature form.

It belongs to the prion family. Monomer and homodimer. Has a tendency to aggregate into amyloid fibrils containing a cross-beta spine, formed by a steric zipper of superposed beta-strands. Soluble oligomers may represent an intermediate stage on the path to fibril formation. Copper binding may promote oligomerization. Interacts with GRB2, APP, ERI3/PRNPIP and SYN1. Mislocalized cytosolically exposed PrP interacts with MGRN1; this interaction alters MGRN1 subcellular location and causes lysosomal enlargement. Interacts with KIAA1191.

The protein localises to the cell membrane. The protein resides in the golgi apparatus. Functionally, its primary physiological function is unclear. Has cytoprotective activity against internal or environmental stresses. May play a role in neuronal development and synaptic plasticity. May be required for neuronal myelin sheath maintenance. May play a role in iron uptake and iron homeostasis. Soluble oligomers are toxic to cultured neuroblastoma cells and induce apoptosis (in vitro). Association with GPC1 (via its heparan sulfate chains) targets PRNP to lipid rafts. Also provides Cu(2+) or Zn(2+) for the ascorbate-mediated GPC1 deaminase degradation of its heparan sulfate side chains. The sequence is that of Major prion protein (PRNP) from Theropithecus gelada (Gelada baboon).